The sequence spans 194 residues: MKRERLMSINKEKAEAAIYQFLEAIGENPNREGLLDTPKRVAKMYAEMFLGLGKDPKEEFTAVFKEHHEDVVIVKDISFYSVCEHHLVPFYGKAHIAYLPSDGRVTGLSKLARAVEVASKRPQLQERLTSQIADALVEALNPKGTLVMVEAEHMCMTMRGIKKPGSKTITTTARGLYKESRAERQEVISLMTKD.

Residues C83, H86, and C155 each coordinate Zn(2+).

This sequence belongs to the GTP cyclohydrolase I family. Toroid-shaped homodecamer, composed of two pentamers of five dimers.

The catalysed reaction is GTP + H2O = 7,8-dihydroneopterin 3'-triphosphate + formate + H(+). It functions in the pathway cofactor biosynthesis; 7,8-dihydroneopterin triphosphate biosynthesis; 7,8-dihydroneopterin triphosphate from GTP: step 1/1. In Streptococcus pyogenes serotype M3 (strain ATCC BAA-595 / MGAS315), this protein is GTP cyclohydrolase 1.